The chain runs to 675 residues: DNA ligase (675 aa).

Residues 43 to 47, 92 to 93, and E122 contribute to the NAD(+) site; these read DYEYD and SM. K124 serves as the catalytic N6-AMP-lysine intermediate. R145, E179, K295, and K319 together coordinate NAD(+). Zn(2+) contacts are provided by C413, C416, C431, and C436. The 79-residue stretch at 597 to 675 folds into the BRCT domain; the sequence is SPDGYYKGKK…ETEAIAKFEQ (79 aa).

The protein belongs to the NAD-dependent DNA ligase family. LigA subfamily. The cofactor is Mg(2+). Mn(2+) serves as cofactor.

The catalysed reaction is NAD(+) + (deoxyribonucleotide)n-3'-hydroxyl + 5'-phospho-(deoxyribonucleotide)m = (deoxyribonucleotide)n+m + AMP + beta-nicotinamide D-nucleotide.. DNA ligase that catalyzes the formation of phosphodiester linkages between 5'-phosphoryl and 3'-hydroxyl groups in double-stranded DNA using NAD as a coenzyme and as the energy source for the reaction. It is essential for DNA replication and repair of damaged DNA. This Pediococcus pentosaceus (strain ATCC 25745 / CCUG 21536 / LMG 10740 / 183-1w) protein is DNA ligase.